A 495-amino-acid polypeptide reads, in one-letter code: UDP-glycosyltransferase 71B7 (495 aa).

UDP-alpha-D-glucose-binding positions include serine 284, 351 to 353 (APQ), 368 to 376 (HCGWNSTLE), and 390 to 393 (YAEQ).

It belongs to the UDP-glycosyltransferase family.

This chain is UDP-glycosyltransferase 71B7 (UGT71B7), found in Arabidopsis thaliana (Mouse-ear cress).